A 511-amino-acid chain; its full sequence is Prolyl 3-hydroxylase OGFOD1 (511 aa).

The tract at residues 1 to 20 (MTGKRGTAAGTDGSGNKKGK) is disordered. One can recognise a Fe2OG dioxygenase domain in the interval 138–240 (KTVDISCAQY…RLSVSGWFHG (103 aa)). Residues His-156 and Asp-158 each contribute to the Fe cation site. Tyr-170 is a binding site for 2-oxoglutarate. His-219 lines the Fe cation pocket. Arg-231 contacts 2-oxoglutarate. Residues 372-403 (NEESDEGEGPSEPNTVSQQGASSEDDKVPSCS) are disordered.

The protein belongs to the TPA1 family. Monomer. Fe(2+) serves as cofactor. The cofactor is L-ascorbate.

It is found in the cytoplasm. The protein resides in the nucleus. It carries out the reaction [ribosomal protein uS12]-L-proline + 2-oxoglutarate + O2 = [ribosomal protein uS12]-(3S)-3-hydroxy-L-proline + succinate + CO2. Its function is as follows. Prolyl 3-hydroxylase that catalyzes 3-hydroxylation of 'Pro-62' of small ribosomal subunit uS12 (rps23), thereby regulating protein translation termination efficiency. Involved in stress granule formation. The protein is Prolyl 3-hydroxylase OGFOD1 (ogfod1) of Xenopus laevis (African clawed frog).